Reading from the N-terminus, the 717-residue chain is Delta-like protein D (717 aa).

An N-terminal signal peptide occupies residues 1–19 (MGRLMIAVLLCVMISQGFC). At 20 to 547 (SGVFELKLQE…EEDDGGFPWT (528 aa)) the chain is on the extracellular side. The DSL domain occupies 175–219 (FVCDEHYYGEGCSVFCRPRDDTFGHFTCGERGEIICNSGWKGQYC). 26 disulfides stabilise this stretch: Cys177/Cys186, Cys190/Cys202, Cys210/Cys219, Cys224/Cys235, Cys228/Cys241, Cys243/Cys252, Cys261/Cys266, Cys274/Cys283, Cys290/Cys302, Cys296/Cys312, Cys314/Cys323, Cys330/Cys341, Cys335/Cys350, Cys352/Cys361, Cys368/Cys379, Cys373/Cys389, Cys391/Cys400, Cys407/Cys418, Cys412/Cys427, Cys429/Cys438, Cys445/Cys456, Cys450/Cys465, Cys467/Cys476, Cys483/Cys494, Cys488/Cys503, and Cys505/Cys514. EGF-like domains are found at residues 220-253 (TEPI…KYCD), 257-284 (RYPG…LFCN), and 286-324 (DLNY…DSCE). In terms of domain architecture, EGF-like 4; calcium-binding spans 326–362 (EVNECSGSPCRNGGSCTDLENTYSCTCPPGFYGRNCE). 2 consecutive EGF-like domains span residues 364-401 (SAMT…FNCE) and 403-439 (KIDH…THCE). The EGF-like 7; calcium-binding domain occupies 441 to 477 (NIDECATYPCQNGGTCQDGLSDYTCTCPPGYTGKNCT). N-linked (GlcNAc...) asparagine glycosylation occurs at Asn475. The region spanning 479–515 (AVNKCLHNPCHNGATCHEMDNRYVCACIPGYGGRNCQ) is the EGF-like 8 domain. The helical transmembrane segment at 548-568 (AVCAGIILVLLVLIGGSVFVI) threads the bilayer. Residues 569–717 (YIRLKLQQRS…KDECIIATEV (149 aa)) lie on the Cytoplasmic side of the membrane. The segment at 649–693 (EDLGKEDSERSEATKCEPLDSDSEEKHRNHLKSDSSERKRTESLC) is disordered.

Interacts with mib. Ubiquitinated by mib, leading to its endocytosis and subsequent degradation. In terms of tissue distribution, expressed in both mesodermal and neuroectodermal regions. In the developing nervous system, it is expressed in overlapping regions with deltaB (dlb) and deltaA (dla); in the neural plate, dld is expressed in patches of contiguous cells with dla, while dlb is confined to scattered cells within those patches that will differentiate as neurons. In somites, it marks the anterior part of each formed somite, while deltaC (dlc) marks the posterior part. In 24 hours embryos, expressed in the hindbrain in stripes adjacent to rhombomere boundaries, but not in the actual boundary cells.

It is found in the membrane. In terms of biological role, acts as a ligand for Notch receptors and is involved in primary neurogenesis and somitogenesis. Can activate Notch receptors, thereby playing a key role in lateral inhibition, a process that prevents the immediate neighbors of each nascent neural cell from simultaneously embarking on neural differentiation. Required in somite segmentation to keep the oscillations of neighboring presomitic mesoderm cells synchronized. In Danio rerio (Zebrafish), this protein is Delta-like protein D (dld).